The sequence spans 170 residues: Photosystem II extrinsic protein V (170 aa).

An N-terminal signal peptide occupies residues 1–33 (MASLFSTLQRSLKGLLILVPVLIGLVLASPAEA). Heme c-binding residues include Cys-70, Cys-73, His-74, and Met-137.

The protein belongs to the cytochrome c family. PsbV subfamily. As to quaternary structure, PSII is composed of 1 copy each of membrane proteins PsbA, PsbB, PsbC, PsbD, PsbE, PsbF, PsbH, PsbI, PsbJ, PsbK, PsbL, PsbM, PsbT, PsbX, PsbY, PsbZ, Psb30/Ycf12, peripheral proteins PsbO, CyanoQ (PsbQ), PsbU, PsbV and a large number of cofactors. It forms dimeric complexes. The cofactor is heme c.

It is found in the cellular thylakoid membrane. In terms of biological role, one of the extrinsic, lumenal subunits of photosystem II (PSII). PSII is a light-driven water plastoquinone oxidoreductase, using light energy to abstract electrons from H(2)O, generating a proton gradient subsequently used for ATP formation. The extrinsic proteins stabilize the structure of photosystem II oxygen-evolving complex (OEC), the ion environment of oxygen evolution and protect the OEC against heat-induced inactivation. Low-potential cytochrome c that plays a role in the OEC of PSII. The protein is Photosystem II extrinsic protein V of Parasynechococcus marenigrum (strain WH8102).